A 260-amino-acid chain; its full sequence is Snake venom serine protease 2 (260 aa).

A signal peptide spans 1–18 (MVLIRVLANLLILQLFYA). A propeptide spanning residues 19-24 (QKSSEL) is cleaved from the precursor. The Peptidase S1 domain occupies 25-251 (IIGGDECNIN…HLDWIKSIIA (227 aa)). Cystine bridges form between Cys-31/Cys-165, Cys-52/Cys-68, Cys-100/Cys-258, Cys-144/Cys-212, Cys-176/Cys-191, and Cys-202/Cys-227. Residues Asn-123 and Asn-124 are each glycosylated (N-linked (GlcNAc...) asparagine).

Belongs to the peptidase S1 family. Snake venom subfamily. As to quaternary structure, monomer. In terms of tissue distribution, expressed by the venom gland.

The protein localises to the secreted. In terms of biological role, snake venom serine protease that may act in the hemostasis system of the prey. The sequence is that of Snake venom serine protease 2 (TLF2) from Protobothrops flavoviridis (Habu).